Here is a 511-residue protein sequence, read N- to C-terminus: Maturase K (511 aa).

Belongs to the intron maturase 2 family. MatK subfamily.

The protein resides in the plastid. Its subcellular location is the chloroplast. Its function is as follows. Usually encoded in the trnK tRNA gene intron. Probably assists in splicing its own and other chloroplast group II introns. The polypeptide is Maturase K (Maihuenia poeppigii (Hardy cactus)).